A 143-amino-acid chain; its full sequence is 3-hydroxyacyl-[acyl-carrier-protein] dehydratase FabZ (143 aa).

Residue His-47 is part of the active site.

This sequence belongs to the thioester dehydratase family. FabZ subfamily.

It is found in the cytoplasm. The catalysed reaction is a (3R)-hydroxyacyl-[ACP] = a (2E)-enoyl-[ACP] + H2O. Functionally, involved in unsaturated fatty acids biosynthesis. Catalyzes the dehydration of short chain beta-hydroxyacyl-ACPs and long chain saturated and unsaturated beta-hydroxyacyl-ACPs. The protein is 3-hydroxyacyl-[acyl-carrier-protein] dehydratase FabZ of Rickettsia canadensis (strain McKiel).